A 176-amino-acid polypeptide reads, in one-letter code: Inner membrane-spanning protein YciB (176 aa).

Transmembrane regions (helical) follow at residues 3 to 23, 24 to 44, 49 to 69, 72 to 92, 121 to 141, and 149 to 169; these read FLFD…WGIF, TATA…AFRH, TMLW…LVLH, KFIQ…LLAA, VAWA…VHNF, and FKLF…SLWL.

This sequence belongs to the YciB family.

It localises to the cell inner membrane. Functionally, plays a role in cell envelope biogenesis, maintenance of cell envelope integrity and membrane homeostasis. The sequence is that of Inner membrane-spanning protein YciB from Burkholderia orbicola (strain MC0-3).